A 640-amino-acid chain; its full sequence is Protein cereblon (640 aa).

The span at 1–11 shows a compositional bias: acidic residues; that stretch reads MDDEETAEIDE. 2 disordered regions span residues 1 to 25 and 92 to 159; these read MDDE…ELGP and REDP…EAVP. Positions 113 to 137 are enriched in low complexity; it reads QPAQQEEQASLPYDSPSRASISSRH. Residues 278–506 form the Lon N-terminal domain; that stretch reads RMLIFMHQHI…IIDTTLKQES (229 aa). The 110-residue stretch at 505-614 folds into the CULT domain; that stretch reads ESLFYCRYCN…LAGSSVRIGK (110 aa). The Zn(2+) site is built by cysteine 510, cysteine 513, cysteine 579, and cysteine 582.

The protein belongs to the CRBN family. Likely a component of a DCX (DDB1-CUL4-X-box) protein ligase complex. May interact with pic/DDB1. In terms of processing, ubiquitinated.

It is found in the nucleus. Its pathway is protein modification; protein ubiquitination. Functionally, substrate recognition component of a DCX (DDB1-CUL4-X-box) E3 protein ligase complex that mediates the ubiquitination and subsequent proteasomal degradation of target proteins. Has an essential role in mediating growth by negatively regulating insulin signaling. It also has a role in maintaining presynaptic function in the neuromuscular junction synapses of third-instar larvae. The sequence is that of Protein cereblon from Drosophila virilis (Fruit fly).